We begin with the raw amino-acid sequence, 445 residues long: KICSTOR subunit 2 (445 aa).

Belongs to the KICS2 family. Part of the KICSTOR complex composed of KPTN, ITFG2, KICS2 and SZT2. SZT2 probably serves as a link between the other three proteins in the KICSTOR complex and may mediate the direct interaction with the GATOR complex via GATOR1. The KICSTOR complex interacts directly with the GATOR1 complex and most probably indirectly with the GATOR2 complex in an amino acid-independent manner.

Its subcellular location is the lysosome membrane. In terms of biological role, as part of the KICSTOR complex functions in the amino acid-sensing branch of the TORC1 signaling pathway. Recruits, in an amino acid-independent manner, the GATOR1 complex to the lysosomal membranes and allows its interaction with GATOR2 and the RAG GTPases. Functions upstream of the RAG GTPases and is required to negatively regulate mTORC1 signaling in absence of amino acids. In absence of the KICSTOR complex mTORC1 is constitutively localized to the lysosome and activated. The KICSTOR complex is also probably involved in the regulation of mTORC1 by glucose. In Homo sapiens (Human), this protein is KICSTOR subunit 2.